Here is a 289-residue protein sequence, read N- to C-terminus: MQKVIVVTGLSGAGKSTVSKALEDLGYVVVDNVPVDLLHNLLELYEAKNQEQLVAVVVDSRSLRHQGEVSKFVADLKDLKNRMPLDVIFLEASTDTLLSRFNLTRHLHPLVHATGSRIALIEAIEREKELMSELRDVSDVVLDTTGMKERDLVYQVENFIGKDRGPEFYLISFSYQRGLPTNADMIYDARVFQNPYYVDELRTLTGLDDSVAEYVRADHNYGRFLDLWVELAERSYNEHIKMGKPYLVIGVGCTGGQHRSVLVVRDLSDQLTKNGHKVITWHRELGSVN.

9–16 (GLSGAGKS) is an ATP binding site. 59 to 62 (DSRS) contributes to the GTP binding site.

The protein belongs to the RapZ-like family.

Its function is as follows. Displays ATPase and GTPase activities. This Coprothermobacter proteolyticus (strain ATCC 35245 / DSM 5265 / OCM 4 / BT) protein is Nucleotide-binding protein COPRO5265_0725.